Reading from the N-terminus, the 96-residue chain is Putative septation protein SpoVG (96 aa).

The protein belongs to the SpoVG family.

Essential for sporulation. Interferes with or is a negative regulator of the pathway leading to asymmetric septation. The chain is Putative septation protein SpoVG from Priestia megaterium (Bacillus megaterium).